Reading from the N-terminus, the 239-residue chain is Lipoprotein-releasing system ATP-binding protein LolD (239 aa).

The ABC transporter domain maps to 9-239 (LQVQHVSKHY…AATSPTGLAE (231 aa)). ATP is bound at residue 45–52 (GSSGSGKS).

It belongs to the ABC transporter superfamily. Lipoprotein translocase (TC 3.A.1.125) family. In terms of assembly, the complex is composed of two ATP-binding proteins (LolD) and two transmembrane proteins (LolC and LolE).

It is found in the cell inner membrane. Functionally, part of the ABC transporter complex LolCDE involved in the translocation of mature outer membrane-directed lipoproteins, from the inner membrane to the periplasmic chaperone, LolA. Responsible for the formation of the LolA-lipoprotein complex in an ATP-dependent manner. The polypeptide is Lipoprotein-releasing system ATP-binding protein LolD (Shewanella frigidimarina (strain NCIMB 400)).